We begin with the raw amino-acid sequence, 740 residues long: Ion-translocating oxidoreductase complex subunit C (740 aa).

2 4Fe-4S ferredoxin-type domains span residues 369–397 (GEPQEEQSCIRCSACADACPADLLPQQLY) and 407–436 (KATTHNIADCIECGACAWVCPSNIPLVQYF). The [4Fe-4S] cluster site is built by cysteine 377, cysteine 380, cysteine 383, cysteine 387, cysteine 416, cysteine 419, cysteine 422, and cysteine 426. Positions 602 to 716 (KLEQQQANAE…EPEEQVDPRK (115 aa)) are disordered.

Belongs to the 4Fe4S bacterial-type ferredoxin family. RnfC subfamily. The complex is composed of six subunits: RsxA, RsxB, RsxC, RsxD, RsxE and RsxG. [4Fe-4S] cluster serves as cofactor.

It is found in the cell inner membrane. Part of a membrane-bound complex that couples electron transfer with translocation of ions across the membrane. Required to maintain the reduced state of SoxR. The polypeptide is Ion-translocating oxidoreductase complex subunit C (Escherichia coli O139:H28 (strain E24377A / ETEC)).